A 142-amino-acid polypeptide reads, in one-letter code: Large ribosomal subunit protein uL13 (142 aa).

The protein belongs to the universal ribosomal protein uL13 family. In terms of assembly, part of the 50S ribosomal subunit.

In terms of biological role, this protein is one of the early assembly proteins of the 50S ribosomal subunit, although it is not seen to bind rRNA by itself. It is important during the early stages of 50S assembly. In Pseudoalteromonas atlantica (strain T6c / ATCC BAA-1087), this protein is Large ribosomal subunit protein uL13.